Consider the following 444-residue polypeptide: Trigger factor (444 aa).

One can recognise a PPIase FKBP-type domain in the interval G165–P250.

It belongs to the FKBP-type PPIase family. Tig subfamily.

Its subcellular location is the cytoplasm. The enzyme catalyses [protein]-peptidylproline (omega=180) = [protein]-peptidylproline (omega=0). In terms of biological role, involved in protein export. Acts as a chaperone by maintaining the newly synthesized protein in an open conformation. Functions as a peptidyl-prolyl cis-trans isomerase. This is Trigger factor from Campylobacter jejuni subsp. jejuni serotype O:6 (strain 81116 / NCTC 11828).